The chain runs to 429 residues: Glycine betaine monooxygenase oxygenase subunit (429 aa).

A Rieske domain is found at W56 to I163. [2Fe-2S] cluster is bound by residues C98, H100, C118, and H121. The Fe cation site is built by H217 and H222.

This sequence belongs to the bacterial ring-hydroxylating dioxygenase alpha subunit family. As to quaternary structure, the system is composed of an oxygenase subunit (GbcA) and a reductase subunit (GbcB). It depends on [2Fe-2S] cluster as a cofactor. Fe cation is required as a cofactor.

The catalysed reaction is glycine betaine + NADH + O2 + H(+) = N,N-dimethylglycine + formaldehyde + NAD(+) + H2O. Functionally, involved in degradation of glycine betaine. Part of a Rieske-type oxygenase system that catalyzes the conversion of glycine betaine (GB) to dimethylglycine (DMG). This subunit is the terminal oxygenase component of the system. Required for growth on choline and GB, but not for growth on DMG. The chain is Glycine betaine monooxygenase oxygenase subunit from Pseudomonas aeruginosa (strain ATCC 15692 / DSM 22644 / CIP 104116 / JCM 14847 / LMG 12228 / 1C / PRS 101 / PAO1).